Reading from the N-terminus, the 121-residue chain is Small ribosomal subunit protein uS13 (121 aa).

Residues 94 to 121 (GLPVRGQRTRTNSRTRKGPKKGAAALKK) are disordered.

It belongs to the universal ribosomal protein uS13 family. As to quaternary structure, part of the 30S ribosomal subunit. Forms a loose heterodimer with protein S19. Forms two bridges to the 50S subunit in the 70S ribosome.

Located at the top of the head of the 30S subunit, it contacts several helices of the 16S rRNA. In the 70S ribosome it contacts the 23S rRNA (bridge B1a) and protein L5 of the 50S subunit (bridge B1b), connecting the 2 subunits; these bridges are implicated in subunit movement. Contacts the tRNAs in the A and P-sites. The polypeptide is Small ribosomal subunit protein uS13 (Leptothrix cholodnii (strain ATCC 51168 / LMG 8142 / SP-6) (Leptothrix discophora (strain SP-6))).